Here is a 316-residue protein sequence, read N- to C-terminus: Coproporphyrin III ferrochelatase (316 aa).

Fe-coproporphyrin III contacts are provided by residues Y13, R30, 46–47 (RY), S54, and Y125. H183 and E264 together coordinate Fe(2+).

Belongs to the ferrochelatase family.

The protein resides in the cytoplasm. It catalyses the reaction Fe-coproporphyrin III + 2 H(+) = coproporphyrin III + Fe(2+). It participates in porphyrin-containing compound metabolism; protoheme biosynthesis. Functionally, involved in coproporphyrin-dependent heme b biosynthesis. Catalyzes the insertion of ferrous iron into coproporphyrin III to form Fe-coproporphyrin III. The chain is Coproporphyrin III ferrochelatase from Geobacillus thermodenitrificans (strain NG80-2).